The chain runs to 74 residues: Small ribosomal subunit protein bS18 (74 aa).

Belongs to the bacterial ribosomal protein bS18 family. As to quaternary structure, part of the 30S ribosomal subunit. Forms a tight heterodimer with protein bS6.

Functionally, binds as a heterodimer with protein bS6 to the central domain of the 16S rRNA, where it helps stabilize the platform of the 30S subunit. In Sphingopyxis alaskensis (strain DSM 13593 / LMG 18877 / RB2256) (Sphingomonas alaskensis), this protein is Small ribosomal subunit protein bS18.